Consider the following 268-residue polypeptide: 4-hydroxy-tetrahydrodipicolinate reductase (268 aa).

9 to 14 (GCSGRM) provides a ligand contact to NAD(+). Arg36 provides a ligand contact to NADP(+). Residues 98–100 (GTT) and 122–125 (APNT) contribute to the NAD(+) site. Residue His155 is the Proton donor/acceptor of the active site. His156 contributes to the (S)-2,3,4,5-tetrahydrodipicolinate binding site. Lys159 functions as the Proton donor in the catalytic mechanism. 165-166 (GT) contributes to the (S)-2,3,4,5-tetrahydrodipicolinate binding site.

The protein belongs to the DapB family.

It is found in the cytoplasm. It carries out the reaction (S)-2,3,4,5-tetrahydrodipicolinate + NAD(+) + H2O = (2S,4S)-4-hydroxy-2,3,4,5-tetrahydrodipicolinate + NADH + H(+). It catalyses the reaction (S)-2,3,4,5-tetrahydrodipicolinate + NADP(+) + H2O = (2S,4S)-4-hydroxy-2,3,4,5-tetrahydrodipicolinate + NADPH + H(+). Its pathway is amino-acid biosynthesis; L-lysine biosynthesis via DAP pathway; (S)-tetrahydrodipicolinate from L-aspartate: step 4/4. Functionally, catalyzes the conversion of 4-hydroxy-tetrahydrodipicolinate (HTPA) to tetrahydrodipicolinate. The protein is 4-hydroxy-tetrahydrodipicolinate reductase of Colwellia psychrerythraea (strain 34H / ATCC BAA-681) (Vibrio psychroerythus).